A 251-amino-acid polypeptide reads, in one-letter code: Small ribosomal subunit protein uS2 (251 aa).

This sequence belongs to the universal ribosomal protein uS2 family.

This is Small ribosomal subunit protein uS2 from Synechococcus elongatus (strain ATCC 33912 / PCC 7942 / FACHB-805) (Anacystis nidulans R2).